The following is a 212-amino-acid chain: Uridine kinase (212 aa).

Residue 13 to 20 (GGSGSGKT) participates in ATP binding.

This sequence belongs to the uridine kinase family.

It localises to the cytoplasm. The enzyme catalyses uridine + ATP = UMP + ADP + H(+). It carries out the reaction cytidine + ATP = CMP + ADP + H(+). It functions in the pathway pyrimidine metabolism; CTP biosynthesis via salvage pathway; CTP from cytidine: step 1/3. It participates in pyrimidine metabolism; UMP biosynthesis via salvage pathway; UMP from uridine: step 1/1. The sequence is that of Uridine kinase from Bacillus anthracis (strain A0248).